The following is a 357-amino-acid chain: 3-isopropylmalate dehydrogenase (357 aa).

Gly77–Glu90 contributes to the NAD(+) binding site. 4 residues coordinate substrate: Arg97, Arg107, Arg136, and Asp224. Asp224, Asp248, and Asp252 together coordinate Mg(2+). An NAD(+)-binding site is contributed by Gly282–Asn294.

Belongs to the isocitrate and isopropylmalate dehydrogenases family. LeuB type 1 subfamily. In terms of assembly, homodimer. The cofactor is Mg(2+). Mn(2+) serves as cofactor.

The protein resides in the cytoplasm. The enzyme catalyses (2R,3S)-3-isopropylmalate + NAD(+) = 4-methyl-2-oxopentanoate + CO2 + NADH. It functions in the pathway amino-acid biosynthesis; L-leucine biosynthesis; L-leucine from 3-methyl-2-oxobutanoate: step 3/4. Functionally, catalyzes the oxidation of 3-carboxy-2-hydroxy-4-methylpentanoate (3-isopropylmalate) to 3-carboxy-4-methyl-2-oxopentanoate. The product decarboxylates to 4-methyl-2 oxopentanoate. This Clostridium acetobutylicum (strain ATCC 824 / DSM 792 / JCM 1419 / IAM 19013 / LMG 5710 / NBRC 13948 / NRRL B-527 / VKM B-1787 / 2291 / W) protein is 3-isopropylmalate dehydrogenase.